Here is a 386-residue protein sequence, read N- to C-terminus: Succinate--CoA ligase [ADP-forming] subunit beta (386 aa).

Residues 9-244 enclose the ATP-grasp domain; the sequence is KEILRKYGVP…HDEEDPLETR (236 aa). ATP is bound by residues K46, 53 to 55, E99, C102, and E107; that span reads GRG. Positions 199 and 213 each coordinate Mg(2+). Substrate contacts are provided by residues N264 and 321–323; that span reads GIM.

Belongs to the succinate/malate CoA ligase beta subunit family. As to quaternary structure, heterotetramer of two alpha and two beta subunits. Requires Mg(2+) as cofactor.

It catalyses the reaction succinate + ATP + CoA = succinyl-CoA + ADP + phosphate. The catalysed reaction is GTP + succinate + CoA = succinyl-CoA + GDP + phosphate. It participates in carbohydrate metabolism; tricarboxylic acid cycle; succinate from succinyl-CoA (ligase route): step 1/1. In terms of biological role, succinyl-CoA synthetase functions in the citric acid cycle (TCA), coupling the hydrolysis of succinyl-CoA to the synthesis of either ATP or GTP and thus represents the only step of substrate-level phosphorylation in the TCA. The beta subunit provides nucleotide specificity of the enzyme and binds the substrate succinate, while the binding sites for coenzyme A and phosphate are found in the alpha subunit. This is Succinate--CoA ligase [ADP-forming] subunit beta from Rickettsia massiliae (strain Mtu5).